Here is a 432-residue protein sequence, read N- to C-terminus: Proteinase-activated receptor 1 (432 aa).

The N-terminal stretch at 1–21 is a signal peptide; that stretch reads MGPRRLLLVAVGLSLCGPLLS. Positions 22 to 45 are cleaved as a propeptide — removed for receptor activation; the sequence is SRVPMRQPESERMYATPYATPNPR. Topologically, residues 46–109 are extracellular; that stretch reads SFFLRNPSED…SGYLTSPWLT (64 aa). N-linked (GlcNAc...) asparagine glycans are attached at residues N69 and N82. Residues 110 to 135 traverse the membrane as a helical segment; it reads LFIPSVYTFVFIVSLPLNILAIAVFV. Topologically, residues 136–144 are cytoplasmic; sequence FRMKVKKPA. Residues 145–164 form a helical membrane-spanning segment; it reads VVYMLHLAMADVLFVSVLPF. Topologically, residues 165 to 183 are extracellular; the sequence is KISYYFSGTDWQFGSGMCR. A disulfide bridge links C182 with C261. The helical transmembrane segment at 184-205 threads the bilayer; it reads FATAACYCNMYASIMLMTVISI. Topologically, residues 206–225 are cytoplasmic; sequence DRFLAVVYPIQSLSWRTLGR. A helical membrane pass occupies residues 226-246; that stretch reads ANFTCVVIWVMAIMGVVPLLL. Over 247–275 the chain is Extracellular; that stretch reads KEQTTQVPGLNITTCHDVLNETLLHGFYS. 2 N-linked (GlcNAc...) asparagine glycosylation sites follow: N257 and N266. A helical transmembrane segment spans residues 276-295; it reads YYFSAFSAIFFLVPLIISTV. The Cytoplasmic segment spans residues 296 to 318; sequence CYTSIIRCLSSSAVANRSKKSRA. Residues 319 to 341 traverse the membrane as a helical segment; it reads LFLSAAVFCIFIVCFGPTNVLLI. At 342–357 the chain is on the extracellular side; the sequence is VHYLLLSDSPGTETAY. The chain crosses the membrane as a helical span at residues 358–381; the sequence is FAYLLCVCVTSVASCIDPLIYYYA. Residues 382–432 are Cytoplasmic-facing; sequence SSECQKHLYSILCCRESSDSNSCNSTGQLMPSKMDTCSSHLNNSIYKKLLA. A Phosphoserine modification is found at S425.

It belongs to the G-protein coupled receptor 1 family. In terms of processing, proteolytic cleavage by thrombin generates a new N-terminus that functions as a tethered ligand. Also proteolytically cleaved by cathepsin CTSG. Phosphorylated in the C-terminal tail; probably mediating desensitization prior to the uncoupling and internalization of the receptor. As to expression, expressed in primary cultured oligodendrocytes.

It localises to the cell membrane. High affinity receptor that binds the activated thrombin, leading to calcium release from intracellular stores. The thrombin-activated receptor signaling pathway is mediated through PTX-insensitive G proteins, activation of phospholipase C resulting in the production of 1D-myo-inositol 1,4,5-trisphosphate (InsP3) which binds to InsP3 receptors causing calcium release from the stores. In astrocytes, the calcium released into the cytosol allows the Ca(2+)-dependent release of L-glutamate into the synaptic cleft through BEST1, that targets the neuronal postsynaptic GRIN2A/NMDAR receptor resulting in the synaptic plasticity regulation. May play a role in platelets activation and in vascular development. Mediates up-regulation of pro-inflammatory cytokines, such as MCP-1/CCL2 and IL6, triggered by coagulation factor Xa (F10) in cardiac fibroblasts and umbilical vein endothelial cells. The protein is Proteinase-activated receptor 1 of Rattus norvegicus (Rat).